A 380-amino-acid polypeptide reads, in one-letter code: Glutamate 5-kinase (380 aa).

Residue lysine 20 participates in ATP binding. Substrate contacts are provided by serine 59, aspartate 146, and asparagine 158. Residue 220-226 participates in ATP binding; sequence TGGMYSK. The PUA domain occupies 285-363; that stretch reads SGTVTVDEGA…HEVAAILGDA (79 aa).

It belongs to the glutamate 5-kinase family.

The protein resides in the cytoplasm. The catalysed reaction is L-glutamate + ATP = L-glutamyl 5-phosphate + ADP. It participates in amino-acid biosynthesis; L-proline biosynthesis; L-glutamate 5-semialdehyde from L-glutamate: step 1/2. Catalyzes the transfer of a phosphate group to glutamate to form L-glutamate 5-phosphate. The sequence is that of Glutamate 5-kinase from Nitratidesulfovibrio vulgaris (strain ATCC 29579 / DSM 644 / CCUG 34227 / NCIMB 8303 / VKM B-1760 / Hildenborough) (Desulfovibrio vulgaris).